The primary structure comprises 103 residues: Astacin-like peptidase p16 (103 aa).

Positions 1 to 103 constitute a Peptidase M12A domain; it reads NAIPGQHYRW…DAFSRDGSPM (103 aa).

Zn(2+) serves as cofactor.

Functionally, active against casein. Has a role as a digestive enzyme. This chain is Astacin-like peptidase p16, found in Argiope aurantia (Black-and-yellow garden spider).